The following is a 594-amino-acid chain: Zinc finger protein 467 (594 aa).

Positions 1-86 (MRETLEALNS…PQKAEPAGSV (86 aa)) are disordered. The interval 1-183 (MRETLEALNS…TLRLHQRLHR (183 aa)) is interaction with STAT3. The segment covering 31–47 (SNAQEKMSSRGESTLHS) has biased composition (polar residues). The span at 54–64 (PGQKEGIHTEQ) shows a compositional bias: basic and acidic residues. Lysine 97 is covalently cross-linked (Glycyl lysine isopeptide (Lys-Gly) (interchain with G-Cter in SUMO2)). 12 consecutive C2H2-type zinc fingers follow at residues 160–182 (YGCE…QRLH), 188–210 (CACP…QRSH), 216–238 (FPCS…LRTH), 244–266 (YPCA…QKTH), 272–294 (FPCT…QRIH), 300–322 (YQCT…QRVH), 355–377 (FACS…QSLH), 430–452 (FFCP…RRVH), 458–480 (FACA…SRAH), 486–508 (FACA…QAVH), 514–536 (HACA…QAIH), and 542–564 (FSCP…QRIH). The tract at residues 313-351 (QHLVRHQRVHDAASRTRSSPDIPVAPHSPTASLTPSPPG) is disordered. Residue lysine 368 forms a Glycyl lysine isopeptide (Lys-Gly) (interchain with G-Cter in SUMO2) linkage.

Belongs to the krueppel C2H2-type zinc-finger protein family. In terms of assembly, interacts with STAT3. Enhances STAT3 activity by keeping it in the nucleus.

It localises to the nucleus. In terms of biological role, transcription factor that promotes adipocyte differentiation and suppresses osteoblast differentiation in the bone marrow. Enhances the osteoclast-supporting ability of stromal cells. Binds with STAT3 the consensus sequence 5'-CTTCTGGGAAGA-3' of the acute phase response element (APRE). Transactivates several promoters including FOS, OSM and PPARG. Recruits a histone deacetylase complex. In Mus musculus (Mouse), this protein is Zinc finger protein 467 (Znf467).